The primary structure comprises 736 residues: MNVTTRENGGLRQRDLDALARAEHADPFAVLGPHGDGAGGQVVRAFLPNALKVRIQARDDGRVLAEMEQGSLPGLFSAHLDKAQPYQLHIVWAGGEQVTEDPYSFGPQLGDMDLHLFAEGNHRDLSGRFGAQPTQVDGIDGVCFSVWAPNARRVSVVGDFNNWDGRRHPMRLRHGAGVWELFIPRLGVGETYKFEVLGKDGILPLKADPLARATELPPSTASKVAGELSHAWQDHDWMAQRAQRHAYNAPLSIYELHPGSWRCELDEAGEIGRFYNWRELAERLVPYVQELGFTHIELLPIMEHPFGGSWGYQPLSMFAPTSRYGSAEDFAAFIDACHQGGIGVLLDWVPAHFPTDEHGLARFDGTALYEYDNPLEGYHQDWNTLIYNLGRNEVRGFMMASALHWLKHFHIDGLRVDAVASMLYRDYSRKAGEWVPNRHGGRENLEAIDFIRHLNGVAAHEAPGALIIAEESTAWPGVSQPTQQGGLGFAYKWNMGWMHDTLHYIQNDPVHRTYHHNEMSFGLIYAYSEHFILPISHDEVVHGKHSLIDKMPGDRWQKFANLRAYLTFMWAHPGKKLLFMGCEFGQWREWNHDAELDWYLLQYPEHQGVQRLVGDLNRLYREEPALHEQDCQPQGFQWLIGDDAQNSVYAWLRWSSSGEPVLVVANFTPVPREGYRIGVPFGERWQELLNSDAELYAGSNVGNLGAVASDEVASHGQPLSLALNLPPLGVLIMKPA.

The Nucleophile role is filled by D417. The active-site Proton donor is the E470.

The protein belongs to the glycosyl hydrolase 13 family. GlgB subfamily. As to quaternary structure, monomer.

It carries out the reaction Transfers a segment of a (1-&gt;4)-alpha-D-glucan chain to a primary hydroxy group in a similar glucan chain.. It participates in glycan biosynthesis; glycogen biosynthesis. Functionally, catalyzes the formation of the alpha-1,6-glucosidic linkages in glycogen by scission of a 1,4-alpha-linked oligosaccharide from growing alpha-1,4-glucan chains and the subsequent attachment of the oligosaccharide to the alpha-1,6 position. The sequence is that of 1,4-alpha-glucan branching enzyme GlgB from Pseudomonas putida (strain ATCC 47054 / DSM 6125 / CFBP 8728 / NCIMB 11950 / KT2440).